A 702-amino-acid polypeptide reads, in one-letter code: Methionine--tRNA ligase (702 aa).

A 'HIGH' region motif is present at residues 23–33 (PYANGPLHLGH). Zn(2+)-binding residues include Cys154, Cys157, Cys167, and Cys170. The 'KMSKS' region motif lies at 341-345 (KMSKS). ATP is bound at residue Lys344. Residues 562 to 593 (LAPPPASAKQQNASMSNTAPPPTAEEPETTAP) form a disordered region. The span at 569-578 (AKQQNASMSN) shows a compositional bias: polar residues. In terms of domain architecture, tRNA-binding spans 599 to 702 (DFAKLDLRIG…SSAQPGMPVR (104 aa)).

The protein belongs to the class-I aminoacyl-tRNA synthetase family. MetG type 1 subfamily. In terms of assembly, homodimer. It depends on Zn(2+) as a cofactor.

It localises to the cytoplasm. It catalyses the reaction tRNA(Met) + L-methionine + ATP = L-methionyl-tRNA(Met) + AMP + diphosphate. Is required not only for elongation of protein synthesis but also for the initiation of all mRNA translation through initiator tRNA(fMet) aminoacylation. This chain is Methionine--tRNA ligase, found in Xylella fastidiosa (strain M12).